Consider the following 178-residue polypeptide: ATP synthase subunit delta (178 aa).

The protein belongs to the ATPase delta chain family. As to quaternary structure, F-type ATPases have 2 components, F(1) - the catalytic core - and F(0) - the membrane proton channel. F(1) has five subunits: alpha(3), beta(3), gamma(1), delta(1), epsilon(1). F(0) has three main subunits: a(1), b(2) and c(10-14). The alpha and beta chains form an alternating ring which encloses part of the gamma chain. F(1) is attached to F(0) by a central stalk formed by the gamma and epsilon chains, while a peripheral stalk is formed by the delta and b chains.

Its subcellular location is the cell membrane. Its function is as follows. F(1)F(0) ATP synthase produces ATP from ADP in the presence of a proton or sodium gradient. F-type ATPases consist of two structural domains, F(1) containing the extramembraneous catalytic core and F(0) containing the membrane proton channel, linked together by a central stalk and a peripheral stalk. During catalysis, ATP synthesis in the catalytic domain of F(1) is coupled via a rotary mechanism of the central stalk subunits to proton translocation. Functionally, this protein is part of the stalk that links CF(0) to CF(1). It either transmits conformational changes from CF(0) to CF(1) or is implicated in proton conduction. This Streptococcus sanguinis (strain SK36) protein is ATP synthase subunit delta.